The chain runs to 270 residues: Phosphatidylinositol transfer protein alpha isoform (270 aa).

Residues Thr-58, Lys-60, Glu-85, Asn-89, Thr-96, and Lys-194 each coordinate a 1,2-diacyl-sn-glycero-3-phospho-(1D-myo-inositol). N6-acetyllysine is present on Lys-215.

This sequence belongs to the PtdIns transfer protein family. PI transfer class I subfamily. Phosphorylated by PKC in a calcium and phosphatidylserine-dependent manner.

It is found in the cytoplasm. The protein resides in the nucleus. It catalyses the reaction a 1,2-diacyl-sn-glycero-3-phosphocholine(in) = a 1,2-diacyl-sn-glycero-3-phosphocholine(out). It carries out the reaction a 1,2-diacyl-sn-glycero-3-phospho-(1D-myo-inositol)(in) = a 1,2-diacyl-sn-glycero-3-phospho-(1D-myo-inositol)(out). Functionally, catalyzes the transfer of phosphatidylinositol (PI) and phosphatidylcholine (PC) between membranes. Shows a preference for PI and PC containing shorter saturated or monosaturated acyl chains at the sn-1 and sn-2 positions. Preference order for PC is C16:1 &gt; C16:0 &gt; C18:1 &gt; C18:0 &gt; C20:4 and for PI is C16:1 &gt; C16:0 &gt; C18:1 &gt; C18:0 &gt; C20:4 &gt; C20:3. In Bos taurus (Bovine), this protein is Phosphatidylinositol transfer protein alpha isoform (PITPNA).